An 89-amino-acid polypeptide reads, in one-letter code: Small ribosomal subunit protein uS15 (89 aa).

Belongs to the universal ribosomal protein uS15 family. As to quaternary structure, part of the 30S ribosomal subunit. Forms a bridge to the 50S subunit in the 70S ribosome, contacting the 23S rRNA.

Functionally, one of the primary rRNA binding proteins, it binds directly to 16S rRNA where it helps nucleate assembly of the platform of the 30S subunit by binding and bridging several RNA helices of the 16S rRNA. In terms of biological role, forms an intersubunit bridge (bridge B4) with the 23S rRNA of the 50S subunit in the ribosome. This Nitratiruptor sp. (strain SB155-2) protein is Small ribosomal subunit protein uS15.